Reading from the N-terminus, the 116-residue chain is NADPH-dependent 7-cyano-7-deazaguanine reductase (116 aa).

Cysteine 31 serves as the catalytic Thioimide intermediate. Residue aspartate 38 is the Proton donor of the active site. Substrate contacts are provided by residues 53 to 55 (IEL) and 72 to 73 (YE).

The protein belongs to the GTP cyclohydrolase I family. QueF type 1 subfamily.

The protein resides in the cytoplasm. The catalysed reaction is 7-aminomethyl-7-carbaguanine + 2 NADP(+) = 7-cyano-7-deazaguanine + 2 NADPH + 3 H(+). It participates in tRNA modification; tRNA-queuosine biosynthesis. Functionally, catalyzes the NADPH-dependent reduction of 7-cyano-7-deazaguanine (preQ0) to 7-aminomethyl-7-deazaguanine (preQ1). The sequence is that of NADPH-dependent 7-cyano-7-deazaguanine reductase from Chlorobium luteolum (strain DSM 273 / BCRC 81028 / 2530) (Pelodictyon luteolum).